Reading from the N-terminus, the 1213-residue chain is uncharacterized protein (1213 aa).

In terms of domain architecture, PH spans 289–390 (ATKRQGWLLR…WGSVINNARE (102 aa)). One can recognise a VASt domain in the interval 776–945 (LDDIVFDRVY…EVNFLEKATR (170 aa)). Helical transmembrane passes span 996-1016 (LFLQGLAIDLLKLPWAVFHIF) and 1025-1045 (FLVIIFACSVILNLSLMFCFG).

The protein localises to the cytoplasm. It localises to the nucleus membrane. The protein resides in the cytoskeleton. It is found in the microtubule organizing center. Its subcellular location is the spindle pole body. This is an uncharacterized protein from Schizosaccharomyces pombe (strain 972 / ATCC 24843) (Fission yeast).